Reading from the N-terminus, the 375-residue chain is Carboxypeptidase O (375 aa).

Positions 1–20 are cleaved as a signal peptide; sequence MKPLLGTFYLLGMLVPGWLG. A Peptidase M14 domain is found at 50–345; sequence RYHPMGEIYQ…EAVLSVLDDV (296 aa). Zn(2+) contacts are provided by His109 and Glu112. An N-linked (GlcNAc...) asparagine glycan is attached at Asn175. His237 contributes to the Zn(2+) binding site. The N-linked (GlcNAc...) asparagine glycan is linked to Asn252. Residue Glu311 is the Proton donor/acceptor of the active site. The N-linked (GlcNAc...) asparagine glycan is linked to Asn315. A lipid anchor (GPI-anchor amidated serine) is attached at Ser354. A propeptide spans 355–375 (removed in mature form); that stretch reads ARKAKSTALVLGLLMSFMSLL.

Belongs to the peptidase M14 family. It depends on Zn(2+) as a cofactor.

The protein resides in the apical cell membrane. In terms of biological role, carboxypeptidase which preferentially cleaves C-terminal acidic residues from peptides and proteins. Can also cleave C-terminal hydrophobic amino acids, with a preference for small residues over large residues. The sequence is that of Carboxypeptidase O from Bos taurus (Bovine).